The following is a 313-amino-acid chain: Putative zinc finger protein 077L (313 aa).

The segment at 174–199 (CFSITKGIECPHYSCTYIHNYSQIEH) adopts a C3H1-type zinc-finger fold. The segment at 294–313 (SDDSDSENNDEDDDWKIDLF) is disordered. Residues 296–313 (DSDSENNDEDDDWKIDLF) are compositionally biased toward acidic residues.

The protein belongs to the IIV-6 077L family.

This is Putative zinc finger protein 077L from Invertebrate iridescent virus 6 (IIV-6).